We begin with the raw amino-acid sequence, 314 residues long: Tetraacyldisaccharide 4'-kinase (314 aa).

61–68 (IVGGSGKT) contacts ATP.

Belongs to the LpxK family.

It carries out the reaction a lipid A disaccharide + ATP = a lipid IVA + ADP + H(+). It functions in the pathway glycolipid biosynthesis; lipid IV(A) biosynthesis; lipid IV(A) from (3R)-3-hydroxytetradecanoyl-[acyl-carrier-protein] and UDP-N-acetyl-alpha-D-glucosamine: step 6/6. Its function is as follows. Transfers the gamma-phosphate of ATP to the 4'-position of a tetraacyldisaccharide 1-phosphate intermediate (termed DS-1-P) to form tetraacyldisaccharide 1,4'-bis-phosphate (lipid IVA). This Aliarcobacter butzleri (strain RM4018) (Arcobacter butzleri) protein is Tetraacyldisaccharide 4'-kinase.